The chain runs to 252 residues: Uridylate kinase (252 aa).

23-26 (KLSG) contributes to the ATP binding site. Residue Gly-65 participates in UMP binding. ATP contacts are provided by Gly-66 and Arg-70. UMP is bound by residues Asp-85 and 146-153 (LGAPFFST). Residues Thr-173, Gln-174, Tyr-179, and Asp-182 each contribute to the ATP site.

The protein belongs to the UMP kinase family. As to quaternary structure, homohexamer.

The protein localises to the cytoplasm. The catalysed reaction is UMP + ATP = UDP + ADP. It participates in pyrimidine metabolism; CTP biosynthesis via de novo pathway; UDP from UMP (UMPK route): step 1/1. Its activity is regulated as follows. Inhibited by UTP. In terms of biological role, catalyzes the reversible phosphorylation of UMP to UDP. The protein is Uridylate kinase of Thermobifida fusca (strain YX).